The sequence spans 360 residues: Holliday junction branch migration complex subunit RuvB (360 aa).

The interval 1–46 (MAIKRSGNSDRPAKNPSSTPGTNAPTLLSPTPTHQEKETSEEKIRP) is disordered. A large ATPase domain (RuvB-L) region spans residues 13 to 205 (AKNPSSTPGT…FGLIQRLRFY (193 aa)). A compositionally biased stretch (polar residues) spans 15–33 (NPSSTPGTNAPTLLSPTPT). Positions 34–46 (HQEKETSEEKIRP) are enriched in basic and acidic residues. ATP-binding positions include Ile44, Arg45, Gly86, Lys89, Thr90, Thr91, 152 to 154 (EDY), Arg195, Tyr205, and Arg242. Thr90 provides a ligand contact to Mg(2+). Residues 206-276 (EVDELTLIVL…LASEALDIYQ (71 aa)) form a small ATPAse domain (RuvB-S) region. The tract at residues 279–360 (KQGLDWIDRL…LTSEEQLSIF (82 aa)) is head domain (RuvB-H). 2 residues coordinate DNA: Arg334 and Arg339.

This sequence belongs to the RuvB family. Homohexamer. Forms an RuvA(8)-RuvB(12)-Holliday junction (HJ) complex. HJ DNA is sandwiched between 2 RuvA tetramers; dsDNA enters through RuvA and exits via RuvB. An RuvB hexamer assembles on each DNA strand where it exits the tetramer. Each RuvB hexamer is contacted by two RuvA subunits (via domain III) on 2 adjacent RuvB subunits; this complex drives branch migration. In the full resolvosome a probable DNA-RuvA(4)-RuvB(12)-RuvC(2) complex forms which resolves the HJ.

Its subcellular location is the cytoplasm. It catalyses the reaction ATP + H2O = ADP + phosphate + H(+). In terms of biological role, the RuvA-RuvB-RuvC complex processes Holliday junction (HJ) DNA during genetic recombination and DNA repair, while the RuvA-RuvB complex plays an important role in the rescue of blocked DNA replication forks via replication fork reversal (RFR). RuvA specifically binds to HJ cruciform DNA, conferring on it an open structure. The RuvB hexamer acts as an ATP-dependent pump, pulling dsDNA into and through the RuvAB complex. RuvB forms 2 homohexamers on either side of HJ DNA bound by 1 or 2 RuvA tetramers; 4 subunits per hexamer contact DNA at a time. Coordinated motions by a converter formed by DNA-disengaged RuvB subunits stimulates ATP hydrolysis and nucleotide exchange. Immobilization of the converter enables RuvB to convert the ATP-contained energy into a lever motion, pulling 2 nucleotides of DNA out of the RuvA tetramer per ATP hydrolyzed, thus driving DNA branch migration. The RuvB motors rotate together with the DNA substrate, which together with the progressing nucleotide cycle form the mechanistic basis for DNA recombination by continuous HJ branch migration. Branch migration allows RuvC to scan DNA until it finds its consensus sequence, where it cleaves and resolves cruciform DNA. This chain is Holliday junction branch migration complex subunit RuvB, found in Rippkaea orientalis (strain PCC 8801 / RF-1) (Cyanothece sp. (strain PCC 8801)).